The primary structure comprises 303 residues: ATP-dependent (S)-NAD(P)H-hydrate dehydratase (303 aa).

The 288-residue stretch at 12-299 folds into the YjeF C-terminal domain; it reads QQQLVCSVIP…AEVRTAFSML (288 aa). Residues glycine 106 and 158–164 each bind (6S)-NADPHX; that span reads NAVELDR. ATP-binding positions include 194-198 and 213-222; these read KGSED and GSPRRCGGQG. Aspartate 223 serves as a coordination point for (6S)-NADPHX.

The protein belongs to the NnrD/CARKD family. It depends on Mg(2+) as a cofactor.

The catalysed reaction is (6S)-NADHX + ATP = ADP + phosphate + NADH + H(+). It carries out the reaction (6S)-NADPHX + ATP = ADP + phosphate + NADPH + H(+). Catalyzes the dehydration of the S-form of NAD(P)HX at the expense of ATP, which is converted to ADP. Together with NAD(P)HX epimerase, which catalyzes the epimerization of the S- and R-forms, the enzyme allows the repair of both epimers of NAD(P)HX, a damaged form of NAD(P)H that is a result of enzymatic or heat-dependent hydration. In Ixodes scapularis (Black-legged tick), this protein is ATP-dependent (S)-NAD(P)H-hydrate dehydratase.